The following is a 559-amino-acid chain: PHD finger protein 1 (559 aa).

In terms of domain architecture, Tudor spans 29–86; that stretch reads PRLWEGQDVLARWTDGLLYLGTIKKVDSAREVCLVQFEDDSQFLVLWKDISPAALPGE. 2 PHD-type zinc fingers span residues 87 to 142 and 186 to 240; these read ELLC…CVFA and QSYC…CRGG. Disordered stretches follow at residues 338-434 and 448-526; these read PVEL…TDAR and HPSA…GGVS. A compositionally biased stretch (basic and acidic residues) spans 369–386; that stretch reads WRSEPEPLRRRQKGKVEE. Polar residues-rich tracts occupy residues 417–426 and 449–459; these read NQSYEGSSGY and PSASTAGTSGD. A compositionally biased stretch (low complexity) spans 481–515; sequence SSPHSVTASSSSVPALTPGFSRHSPPSPLCRSLSP.

Belongs to the Polycomblike family. In terms of assembly, associated component of the PRC2 complex. Interacts with p53/TP53. Interacts with CHMP1. In terms of tissue distribution, testis-specific.

The protein localises to the nucleus. The protein resides in the cytoplasm. It is found in the cytoskeleton. It localises to the microtubule organizing center. Its subcellular location is the centrosome. Polycomb group (PcG) that specifically binds histone H3 trimethylated at 'Lys-36' (H3K36me3) and recruits the PRC2 complex. Involved in DNA damage response and is recruited at double-strand breaks (DSBs). Acts by binding to H3K36me3, a mark for transcriptional activation, and recruiting the PRC2 complex: it is however unclear whether recruitment of the PRC2 complex to H3K36me3 leads to enhance or inhibit H3K27me3 methylation mediated by the PRC2 complex. According to some reports, PRC2 recruitment by PHF1 promotes H3K27me3 and subsequent gene silencing by inducing spreading of PRC2 and H3K27me3 into H3K36me3 loci. According to other reports, PHF1 recruits the PRC2 complex at double-strand breaks (DSBs) and inhibits the activity of PRC2. Regulates p53/TP53 stability and prolonges its turnover: may act by specifically binding to a methylated from of p53/TP53. This chain is PHD finger protein 1 (Phf1), found in Mus musculus (Mouse).